A 330-amino-acid chain; its full sequence is Probable deoxyhypusine synthase (330 aa).

Residue Lys-303 is the Nucleophile of the active site.

The protein belongs to the deoxyhypusine synthase family. Requires NAD(+) as cofactor.

The enzyme catalyses [eIF5A protein]-L-lysine + spermidine = [eIF5A protein]-deoxyhypusine + propane-1,3-diamine. It participates in protein modification; eIF5A hypusination. In terms of biological role, catalyzes the NAD-dependent oxidative cleavage of spermidine and the subsequent transfer of the butylamine moiety of spermidine to the epsilon-amino group of a specific lysine residue of the eIF-5A precursor protein to form the intermediate deoxyhypusine residue. The chain is Probable deoxyhypusine synthase (dys) from Methanocaldococcus jannaschii (strain ATCC 43067 / DSM 2661 / JAL-1 / JCM 10045 / NBRC 100440) (Methanococcus jannaschii).